A 160-amino-acid polypeptide reads, in one-letter code: Anaerobic nitrite reductase Glb1-1 (160 aa).

The 150-residue stretch at 8-157 (GFTEEQEALV…LVNAIKSEMK (150 aa)) folds into the Globin domain. Residues 41–45 (EIAPS) carry the Homodimerization motif. Residues serine 51, lysine 65, histidine 69, lysine 99, and histidine 104 each contribute to the heme b site. The Homodimerization signature appears at 111 to 123 (DEHFEVTKFALLE).

It belongs to the plant globin family. As to quaternary structure, homodimer. The cofactor is heme b.

It carries out the reaction Fe(III)-heme b-[protein] + nitric oxide + H2O = Fe(II)-heme b-[protein] + nitrite + 2 H(+). Phytoglobin that reduces nitrite to nitric oxide (NO) under anoxic conditions (e.g. during flooding or in waterlogged soil) and upon root nodulation. Required for general plant development and during nodulation, especially for the onset of symbiosis. Monitors nitric oxide (NO) levels during early phase of the nitrogen-fixing symbiosis and buffers oxygen in functioning nodules. May not function as an oxygen storage or transport protein. Has an unusually high affinity for O(2) through a hexacoordinate heme iron because of a very low dissociation constant. The protein is Anaerobic nitrite reductase Glb1-1 of Medicago truncatula (Barrel medic).